We begin with the raw amino-acid sequence, 263 residues long: 3-deoxy-manno-octulosonate cytidylyltransferase (263 aa).

This sequence belongs to the KdsB family.

The protein resides in the cytoplasm. It catalyses the reaction 3-deoxy-alpha-D-manno-oct-2-ulosonate + CTP = CMP-3-deoxy-beta-D-manno-octulosonate + diphosphate. It functions in the pathway nucleotide-sugar biosynthesis; CMP-3-deoxy-D-manno-octulosonate biosynthesis; CMP-3-deoxy-D-manno-octulosonate from 3-deoxy-D-manno-octulosonate and CTP: step 1/1. It participates in bacterial outer membrane biogenesis; lipopolysaccharide biosynthesis. Activates KDO (a required 8-carbon sugar) for incorporation into bacterial lipopolysaccharide in Gram-negative bacteria. This chain is 3-deoxy-manno-octulosonate cytidylyltransferase, found in Burkholderia cenocepacia (strain HI2424).